Consider the following 615-residue polypeptide: Chaperone protein HscA homolog (615 aa).

It belongs to the heat shock protein 70 family.

Chaperone involved in the maturation of iron-sulfur cluster-containing proteins. Has a low intrinsic ATPase activity which is markedly stimulated by HscB. The protein is Chaperone protein HscA homolog of Aeromonas hydrophila subsp. hydrophila (strain ATCC 7966 / DSM 30187 / BCRC 13018 / CCUG 14551 / JCM 1027 / KCTC 2358 / NCIMB 9240 / NCTC 8049).